The following is a 186-amino-acid chain: Astacin-like metalloprotease toxin 5 (186 aa).

The region spanning 1 to 186 (NAVKYDQQLW…CHSKRKAELL (186 aa)) is the Peptidase M12A domain. Disulfide bonds link C42–C177 and C63–C84. Residue H92 participates in Zn(2+) binding. E93 is an active-site residue. Zn(2+)-binding residues include H96 and H102. N-linked (GlcNAc...) asparagine glycosylation occurs at N122.

In terms of assembly, monomer. It depends on Zn(2+) as a cofactor. In terms of tissue distribution, expressed by the venom gland.

The protein localises to the secreted. With respect to regulation, inhibited by 1,10-phenanthroline. In terms of biological role, zinc metalloprotease. Provoques deadhesion of endothelial cells from cell cultures, and also degradation of fibronectin, fibrinogen and gelatin in vitro. Its role in the venom is not fully understood but it might act as a spreading factor that facilitates diffusion of other venom toxins. Alternatively, it might be involved in the proteolytic processing of other venom toxins or it might play a role in extra-oral digestion of prey. This is Astacin-like metalloprotease toxin 5 from Loxosceles gaucho (Spider).